Here is a 91-residue protein sequence, read N- to C-terminus: Probable Fe(2+)-trafficking protein (91 aa).

The protein belongs to the Fe(2+)-trafficking protein family.

In terms of biological role, could be a mediator in iron transactions between iron acquisition and iron-requiring processes, such as synthesis and/or repair of Fe-S clusters in biosynthetic enzymes. The protein is Probable Fe(2+)-trafficking protein of Shewanella denitrificans (strain OS217 / ATCC BAA-1090 / DSM 15013).